A 1095-amino-acid polypeptide reads, in one-letter code: MATLAYSIEVEGLEDETLVVRGFHGQESLSNSVFLGQACYGFRYEVQLASRVSNLTAEQMVDKRAELKLYRNSQLVQRVHGIVRAFSQGDIGHHHTFYQLTLVPALERLSLRHNSRIFQKQTVPEILSILLQEMGINDYAFALKRDGVQREFCVQYRESDIDFLHRLAAEEGLVYSFVHEAGKHTLYFSDASDSLSKLPEPIPYNALVGGAIDTPYIHGLTYRTQAEVSEVQLKDYSFKKPAYSFLQTVQGTELDYQQTRYQHFDAPGRYKDDVNGAAFSQIRLDYLRRHAHTATGQSNEPLLRAGYKFDLQEHLDPAMNRDWVVVSINHQGEQPQALQEDGGSGATTYSNQFSLIPGHLHWRAEPQPKPQVDGPMIATVVGPEGEEIFCDEHGRVKIHFPWDRYSNGNEQSSCWVRVSQGWAGSQYGFIAIPRIGHEVIVEFLNGDPDQPIITGRTYHATNTPPYTLPEHKTKTVLRTETHQGEGFNELSFEDQAGKEQIYLHAQKDFDGLIENDQFTQIKHNQHLTVEWESREAVTGEQVLSIEGSLHVKTGKVRVNEAGTEIHVKAGQKVVIEAGSEITVKAGGSFVKVDPAGVHLSGALVNLNSGGSAGSGSGFGGAMPALPGGLEPAVALAPPQTISYQALLQAEQANVPAVKVCPLAAQEATPAVNSITPPPPPPIAPPMAPPQPIMNPQPTANAQPNLGRSTKATPDFPTHFPKSSIGIENELAGLVVAMPANSAQKFGYVKSAQGDALFMLTKDMNQGSYQRPPSLQDGKNYQNWQTHTVELVSYPCEMDDKAAVETRKQAMLWLATHFTTHIDQSNHQPLAPIQSEDGRFVIEITNAKHVIAAGNGISAESQGQTITMTPSGQQATVGVAAKGFGTSATPELRLLESAPWYQKSLKSQFASLTSAENLDDKELAANVFAYLTSIYLKTAELAKKFGIYINEWDPMSEQITPNANGLTDPKVKNAWEILPRTKPSKIVEILSKSDAKAVMKHIKPQLQSRYSESLSKNVFQYFQDGGEVAGHGINNATVGDKHSPELAILFEFRTVPNELQSYLPKTESTTKSEVKLLDQFDPMKRKTVIQQVESLV.

In terms of domain architecture, ACD spans 712–1095 (TPDFPTHFPK…TVIQQVESLV (384 aa)). 723–727 (SIGIE) is a binding site for ATP. The Mg(2+) site is built by E727 and E789. An ATP-binding site is contributed by S792. Q873 contacts Mg(2+). Residue R979 participates in ATP binding. Residue E1050 participates in Mg(2+) binding.

It belongs to the VgrG protein family. In terms of assembly, interacts with protein VC1417. Mg(2+) is required as a cofactor.

Its subcellular location is the secreted. The protein resides in the host cytoplasm. It localises to the host cytosol. Functionally, part of the type VI secretion system (T6SS) specialized secretion system, which delivers several virulence factors in both prokaryotic and eukaryotic cells during infection. Forms the spike at the tip of the elongating tube probably formed by hemolysin co-regulated protein/Hcp. Allows the delivery of the TseL antibacterial toxin to target cells where it exerts its toxicity. Also acts directly as an actin-directed toxin that catalyzes the covalent cross-linking of host cytoplasmic monomeric actin. Mediates the cross-link between 'Lys-50' of one monomer and 'Glu-270' of another actin monomer, resulting in formation of highly toxic actin oligomers that cause cell rounding. The toxin can be highly efficient at very low concentrations by acting on formin homology family proteins: toxic actin oligomers bind with high affinity to formins and adversely affect both nucleation and elongation abilities of formins, causing their potent inhibition in both profilin-dependent and independent manners. Acts as an acid--amino-acid ligase that transfers the gamma-phosphoryl group of ATP to the 'Glu-270' actin residue, resulting in the formation of an activated acyl phosphate intermediate. This intermediate is further hydrolyzed and the energy of hydrolysis is utilized for the formation of the amide bond between actin subunits. The polypeptide is Actin cross-linking toxin VgrG1 (Vibrio cholerae serotype O1 (strain ATCC 39541 / Classical Ogawa 395 / O395)).